A 488-amino-acid chain; its full sequence is Sucrose 6(F)-phosphate phosphorylase (488 aa).

Residues Asp49, His87, 195 to 197 (RLD), Glu238, 295 to 296 (HD), 342 to 345 (DVHQ), and Arg399 each bind sucrose 6(F)-phosphate. Catalysis depends on Asp197, which acts as the Nucleophile. Glu238 functions as the Proton donor/acceptor in the catalytic mechanism.

Belongs to the glycosyl hydrolase 13 family. Sucrose phosphorylase subfamily. In terms of assembly, monomer.

It carries out the reaction sucrose 6(F)-phosphate + phosphate = beta-D-fructose 6-phosphate + alpha-D-glucose 1-phosphate. Its function is as follows. Catalyzes the reversible phosphorolysis of sucrose 6(F)-phosphate into alpha-D-glucose 1-phosphate (Glc1P) and D-fructose 6-phosphate. May be involved in a new pathway for the degradation of sucrose, which could become phosphorylated on its fructose moiety during uptake via a PTS system. To a lesser extent, can also reversibly act on sucrose in vitro. Is also able to catalyze transglycosylation reactions in vitro. In Thermoanaerobacterium thermosaccharolyticum (strain ATCC 7956 / DSM 571 / NCIMB 9385 / NCA 3814 / NCTC 13789 / WDCM 00135 / 2032) (Clostridium thermosaccharolyticum), this protein is Sucrose 6(F)-phosphate phosphorylase.